Reading from the N-terminus, the 457-residue chain is D-xylose transporter (457 aa).

10 consecutive transmembrane segments (helical) span residues 14–34 (ALGG…ILFI), 46–66 (GWVV…IGPS), 81–101 (IIFF…TLII), 104–124 (IILG…LAEL), 131–151 (GTVS…AYIT), 164–184 (WMLG…LILP), 244–264 (LIIG…TVLY), 281–301 (LLAH…AVAI), 309–329 (KIVN…SIGM), and 338–358 (AAII…ATWG). Glutamine 138 provides a ligand contact to beta-D-xylose. Residues 254–255 (QQ) and asparagine 260 contribute to the beta-D-xylose site. Residues tryptophan 362 and asparagine 385 each coordinate beta-D-xylose. Transmembrane regions (helical) follow at residues 380–400 (FASV…PSLL) and 402–422 (FFGT…SIWF).

This sequence belongs to the major facilitator superfamily. Sugar transporter (TC 2.A.1.1) family.

It localises to the cell membrane. With respect to regulation, transport is inhibited by 6-deoxy-D-glucose. Functionally, uptake of D-xylose across the boundary membrane with the concomitant transport of protons into the cell (symport system). Transport is driven by the proton motive force generated by either malolactic fermentation or by the metabolism of D-glucose. This chain is D-xylose transporter, found in Levilactobacillus brevis (Lactobacillus brevis).